A 430-amino-acid polypeptide reads, in one-letter code: Glutamate-1-semialdehyde 2,1-aminomutase (430 aa).

Lys267 carries the N6-(pyridoxal phosphate)lysine modification.

The protein belongs to the class-III pyridoxal-phosphate-dependent aminotransferase family. HemL subfamily. Homodimer. Pyridoxal 5'-phosphate serves as cofactor.

The protein localises to the cytoplasm. It catalyses the reaction (S)-4-amino-5-oxopentanoate = 5-aminolevulinate. It participates in porphyrin-containing compound metabolism; protoporphyrin-IX biosynthesis; 5-aminolevulinate from L-glutamyl-tRNA(Glu): step 2/2. The sequence is that of Glutamate-1-semialdehyde 2,1-aminomutase from Cytophaga hutchinsonii (strain ATCC 33406 / DSM 1761 / CIP 103989 / NBRC 15051 / NCIMB 9469 / D465).